A 493-amino-acid polypeptide reads, in one-letter code: Glutamate--tRNA ligase (493 aa).

The 'HIGH' region motif lies at 10–20 (PSPTGDPHVGT). The short motif at 251-255 (KLSKR) is the 'KMSKS' region element. Lys254 contributes to the ATP binding site.

The protein belongs to the class-I aminoacyl-tRNA synthetase family. Glutamate--tRNA ligase type 1 subfamily. Monomer.

It localises to the cytoplasm. It carries out the reaction tRNA(Glu) + L-glutamate + ATP = L-glutamyl-tRNA(Glu) + AMP + diphosphate. Functionally, catalyzes the attachment of glutamate to tRNA(Glu) in a two-step reaction: glutamate is first activated by ATP to form Glu-AMP and then transferred to the acceptor end of tRNA(Glu). This chain is Glutamate--tRNA ligase, found in Pseudomonas putida (strain ATCC 47054 / DSM 6125 / CFBP 8728 / NCIMB 11950 / KT2440).